The chain runs to 165 residues: Cyanate hydratase (165 aa).

The segment at M1–G20 is disordered. Residues R90, E93, and S116 contribute to the active site.

Belongs to the cyanase family.

It carries out the reaction cyanate + hydrogencarbonate + 3 H(+) = NH4(+) + 2 CO2. In terms of biological role, catalyzes the reaction of cyanate with bicarbonate to produce ammonia and carbon dioxide. This is Cyanate hydratase from Medicago truncatula (Barrel medic).